Consider the following 88-residue polypeptide: Small ribosomal subunit protein bS20 (88 aa).

A disordered region spans residues 1-25 (MANSAQARKRARQAVAQNAHNSSLR).

The protein belongs to the bacterial ribosomal protein bS20 family.

Binds directly to 16S ribosomal RNA. In Cupriavidus pinatubonensis (strain JMP 134 / LMG 1197) (Cupriavidus necator (strain JMP 134)), this protein is Small ribosomal subunit protein bS20.